The primary structure comprises 226 residues: Ribonuclease 3 (226 aa).

The RNase III domain occupies 7–129; the sequence is LPRLCRTLGY…IIGAVYLDAD (123 aa). Position 42 (E42) interacts with Mg(2+). D46 is an active-site residue. Residues D115 and E118 each contribute to the Mg(2+) site. E118 is an active-site residue. In terms of domain architecture, DRBM spans 156–226; it reads DPKTILQEYL…AAQVLELLNK (71 aa).

This sequence belongs to the ribonuclease III family. As to quaternary structure, homodimer. The cofactor is Mg(2+).

The protein resides in the cytoplasm. It carries out the reaction Endonucleolytic cleavage to 5'-phosphomonoester.. Its function is as follows. Digests double-stranded RNA. Involved in the processing of primary rRNA transcript to yield the immediate precursors to the large and small rRNAs (23S and 16S). Processes some mRNAs, and tRNAs when they are encoded in the rRNA operon. Processes pre-crRNA and tracrRNA of type II CRISPR loci if present in the organism. The polypeptide is Ribonuclease 3 (Shewanella frigidimarina (strain NCIMB 400)).